A 343-amino-acid chain; its full sequence is uncharacterized protein (343 aa).

A run of 11 helical transmembrane segments spans residues 13–33 (VILY…SMCG), 44–64 (LWGY…ATLD), 71–91 (MHPV…LFFI), 121–141 (ILLL…LTGL), 148–168 (NASL…YLIF), 177–197 (FLGI…GDFS), 203–223 (VAVT…LDTV), 244–264 (VGGF…ELPL), 269–289 (YALG…YIAI), 296–316 (MVGA…FIIL), and 320–340 (FSIM…ILYW). EamA domains lie at 55 to 192 (IFFG…YLLT) and 216 to 340 (FFWS…ILYW).

Belongs to the EamA transporter family.

Its subcellular location is the cell membrane. This is an uncharacterized protein from Methanothermobacter thermautotrophicus (strain ATCC 29096 / DSM 1053 / JCM 10044 / NBRC 100330 / Delta H) (Methanobacterium thermoautotrophicum).